Consider the following 183-residue polypeptide: MLDKIIRIATRQSPLALWQAHYVQHLLQANHPGLQVELVPMVTRGDIILDTPLAKVGGKGLFVKELELALLDGRADIAVHSMKDVPVAFPEGLGLVTICEPDDPRDAFVSPHFAHIDDLPAGSIVGNSSLRRQCQLRERRPDLIIRDLRGNVGTRLAKLDNGDYHAIILAVAGLNRLGLASRI.

The protein belongs to the HMBS family. Monomer. Requires dipyrromethane as cofactor.

It carries out the reaction 4 porphobilinogen + H2O = hydroxymethylbilane + 4 NH4(+). It functions in the pathway porphyrin-containing compound metabolism; protoporphyrin-IX biosynthesis; coproporphyrinogen-III from 5-aminolevulinate: step 2/4. Its function is as follows. Tetrapolymerization of the monopyrrole PBG into the hydroxymethylbilane pre-uroporphyrinogen in several discrete steps. In Yersinia intermedia, this protein is Porphobilinogen deaminase (hemC).